The sequence spans 313 residues: MSTREIRIATRKSALALWQAEYVKARLEQAHPGLLVTLVPMVSRGDKLLDAPLAKIGGKGLFVKELETALLDNEADIAVHSMKDVPMDFPEGLGLYCICEREDPRDAFVSNRFSSLDALPAGSIVGTSSLRRQAQLLARRPDLQIRFLRGNVNTRLAKLDAGEYDAIILAAAGLIRLGFEERITASISVDDSLPAGGQGAVGIECRSADSEIHALLAPLHHTDTADRVVAERALNKHLNGGCQVPIACYAVLEGEQLWLRGLVGQPSGGTLLMADARAPRASAETLGVQVAEDLLGQGAAAILKEVYGEAGHP.

S-(dipyrrolylmethanemethyl)cysteine is present on Cys242.

It belongs to the HMBS family. As to quaternary structure, monomer. It depends on dipyrromethane as a cofactor.

It carries out the reaction 4 porphobilinogen + H2O = hydroxymethylbilane + 4 NH4(+). It functions in the pathway porphyrin-containing compound metabolism; protoporphyrin-IX biosynthesis; coproporphyrinogen-III from 5-aminolevulinate: step 2/4. In terms of biological role, tetrapolymerization of the monopyrrole PBG into the hydroxymethylbilane pre-uroporphyrinogen in several discrete steps. The polypeptide is Porphobilinogen deaminase (Pseudomonas putida (strain W619)).